A 281-amino-acid polypeptide reads, in one-letter code: Undecaprenyl-diphosphatase (281 aa).

A run of 7 helical transmembrane segments spans residues 4–24, 46–63, 83–103, 108–128, 187–207, 222–242, and 257–277; these read ILLL…FLPI, AFEV…CWEF, FVLN…LFGK, VLFS…IIFW, AVAT…ATAY, EFTL…FVCV, and FAWY…TGLI.

The protein belongs to the UppP family.

The protein localises to the cell inner membrane. It catalyses the reaction di-trans,octa-cis-undecaprenyl diphosphate + H2O = di-trans,octa-cis-undecaprenyl phosphate + phosphate + H(+). Functionally, catalyzes the dephosphorylation of undecaprenyl diphosphate (UPP). Confers resistance to bacitracin. This Polynucleobacter necessarius subsp. necessarius (strain STIR1) protein is Undecaprenyl-diphosphatase.